The chain runs to 443 residues: Thymidine phosphorylase (443 aa).

Belongs to the thymidine/pyrimidine-nucleoside phosphorylase family. Homodimer.

It carries out the reaction thymidine + phosphate = 2-deoxy-alpha-D-ribose 1-phosphate + thymine. Its pathway is pyrimidine metabolism; dTMP biosynthesis via salvage pathway; dTMP from thymine: step 1/2. Its function is as follows. The enzymes which catalyze the reversible phosphorolysis of pyrimidine nucleosides are involved in the degradation of these compounds and in their utilization as carbon and energy sources, or in the rescue of pyrimidine bases for nucleotide synthesis. In Shewanella piezotolerans (strain WP3 / JCM 13877), this protein is Thymidine phosphorylase.